A 701-amino-acid chain; its full sequence is MRSSEGAPSWAVALPPPLRPCAYGVSEVTRCWHQLSLGAGESSMNPSATLYRRQNIGSEVETSTIEKQRKELQLLIGELKDRDKELNDMVAVHQRQLLSWEEDRQKVLTLEERCSKLEGELHKRTDIIKSLMKKVKTLESNQAECQTALQKTQQQLQEMAQKATHSTLLSEDLEARNENLSSTLVDLSAQVGQLQAREQALTTMIKLKDKDIIEAVNHISDCSGKFKLLEHALRDAKMAETCVVREKQDYKQKLKALRIEVNKLKEDLNEKTTENNEQREEIIRLKQEKSCLHDELIFTVEREKRKDELLDIAKSKQDRTNSELQNLRQIYVKQQSDLQFLNFNIESSQELIQIHGLKMEEPKALECSKDMCLSDLDNNYPKIDIKRERNQKSLVKDQTFEVMLAQHNGSDKSSCDACREKKLQVNTALGEKSVIALSSLFTKDLLDKQKSWSLGGKIQTEPENKVTLCKVHAKSPKCDGVGLPTEEKQLSETSVSLSDEKQWHDINVYLGLSSCSKQPDRLDGDGHDRTGTSEVSCCTPNVVCIGDNDLSESKCCHPSNIIIEAPGHMTDTEWMNIFKPSRAQRIVRHKTMCTCSRSVSAMKYNSSASELIGMQPSQCVGSLKSAEREEESAALPDRRTSANEKDDFSPTSKLQRLLAESRQMVTDLELSTLLPISCENLNRSKLEVSEEPDEKTTLVSH.

Coiled-coil stretches lie at residues 61-197 (ETST…LQAR) and 241-342 (TCVV…QFLN). Residues 624-652 (KSAEREEESAALPDRRTSANEKDDFSPTS) are disordered. Basic and acidic residues predominate over residues 636 to 648 (PDRRTSANEKDDF). Short sequence motifs (LXXLL motif) lie at residues 654-658 (LQRLL) and 670-674 (LSTLL).

In terms of assembly, interacts with ESR1 and ESR2 in the presence of estradiol/E2. The interaction with ESR2 recruits CCDC62 to ER target genes, including cyclin-D1/CCND1 AP-1 promoter. Interacts with GOPC. Highly expressed in testis, not detected in other tissues (at protein level). Expressed at low levels in the epididymis, lung, spleen, bladder, kidney, liver, muscle.

It is found in the cytoplasm. The protein localises to the nucleus. Its subcellular location is the cytoplasmic vesicle. The protein resides in the secretory vesicle. It localises to the acrosome. Functionally, nuclear receptor coactivator that can enhance preferentially estrogen receptors ESR1 and ESR2 transactivation. Also modulates progesterone/PGR, glucocorticoid/NR3C1 and androgen/AR receptors transactivation, although at lower level; little effect on vitamin D receptor/VDR. Required for normal spermiogenesis. It probably plays a role in acrosome formation. In Mus musculus (Mouse), this protein is Coiled-coil domain-containing protein 62 (Ccdc62).